Here is a 943-residue protein sequence, read N- to C-terminus: Centromere protein C (943 aa).

Residue K45 forms a Glycyl lysine isopeptide (Lys-Gly) (interchain with G-Cter in SUMO2) linkage. Residues 70-91 (CIQSPSKECQKSHPKSVPVSSK) are disordered. Phosphoserine is present on residues S73 and S96. A Glycyl lysine isopeptide (Lys-Gly) (interchain with G-Cter in SUMO2) cross-link involves residue K119. Residue T130 is modified to Phosphothreonine. Residue K134 forms a Glycyl lysine isopeptide (Lys-Gly) (interchain with G-Cter in SUMO2) linkage. The residue at position 146 (S146) is a Phosphoserine. Residue K180 forms a Glycyl lysine isopeptide (Lys-Gly) (interchain with G-Cter in SUMO2) linkage. T183 bears the Phosphothreonine mark. Phosphoserine is present on S189. Residues K212 and K217 each participate in a glycyl lysine isopeptide (Lys-Gly) (interchain with G-Cter in SUMO2) cross-link. Basic and acidic residues predominate over residues 224 to 239 (VSDEEDKTSEGQERKP). Residues 224-250 (VSDEEDKTSEGQERKPSGSSQNRIRDS) are disordered. A Phosphoserine modification is found at S225. Glycyl lysine isopeptide (Lys-Gly) (interchain with G-Cter in SUMO2) cross-links involve residues K238 and K260. Residues 259-273 (KKSFSTLFLETVKRK) carry the Nuclear localization signal motif. Phosphoserine is present on S261. Residues K271, K273, and K297 each participate in a glycyl lysine isopeptide (Lys-Gly) (interchain with G-Cter in SUMO2) cross-link. Residues S316, S333, S376, and S397 each carry the phosphoserine modification. The segment at 358-377 (LANDKHSHKPHPVETSQPSD) is disordered. Residues 403-513 (YSKNAEKPSR…SKNKLVPEEV (111 aa)) are disordered. The span at 412–426 (RSKRTIKQKQRRKFM) shows a compositional bias: basic residues. Basic and acidic residues-rich tracts occupy residues 438–463 (QSKD…RNME) and 488–510 (TRKD…KLVP). Phosphoserine is present on S439. K440 participates in a covalent cross-link: Glycyl lysine isopeptide (Lys-Gly) (interchain with G-Cter in SUMO2). The Nuclear localization signal signature appears at 484 to 499 (KKSSTRKDKEESKKKR). Residue S528 is modified to Phosphoserine. K534 participates in a covalent cross-link: Glycyl lysine isopeptide (Lys-Gly) (interchain with G-Cter in SUMO2). Disordered stretches follow at residues 537–587 (ESPV…ATKG) and 632–717 (DCSR…KQSK). S538 is subject to Phosphoserine. Residues 558–574 (RKSTKKTNQSSKNIRKK) carry the Nuclear localization signal motif. Basic residues predominate over residues 570 to 583 (NIRKKTIPLKRQKT). The segment covering 633 to 672 (CSRSTRSSKNEDNIMTAQNVPLKPQTSGYTCNIPTESNLD) has biased composition (polar residues). K677 participates in a covalent cross-link: Glycyl lysine isopeptide (Lys-Gly) (interchain with G-Cter in SUMO2). Phosphoserine is present on residues S684, S709, and S710. Basic and acidic residues predominate over residues 706–715 (VHGSSDDSKQ). A Glycyl lysine isopeptide (Lys-Gly) (interchain with G-Cter in SUMO2) cross-link involves residue K727. The residue at position 734 (T734) is a Phosphothreonine. Positions 737 to 759 (VRRTKRTRLKPLEYWRGERIDYQ) are MIF2 homology domain II. 2 positions are modified to phosphoserine: S763 and S773. Residues 780–798 (KRKAKENIGKVNKKSNKKR) carry the Nuclear localization signal motif. A Glycyl lysine isopeptide (Lys-Gly) (interchain with G-Cter in SUMO2) cross-link involves residue K807. An MIF2 homology domain III region spans residues 890–943 (LVFYVNFGDLLCTLHETPYILSTGDSFYVPSGNYYNIKNLRNEESVLLFTQIKR).

The protein belongs to the CENP-C/MIF2 family. Oligomer. Component of the CENPA-NAC complex, at least composed of CENPA, CENPC, CENPH, CENPM, CENPN, CENPT and CENPU. The CENPA-NAC complex interacts with the CENPA-CAD complex, composed of CENPI, CENPK, CENPL, CENPO, CENPP, CENPQ, CENPR and CENPS. Binds to DAXX. Interacts with DNMT3B. Interacts directly with CENPA. Identified in a centromere complex containing histones H2A, H2B and H4, and at least CENPA, CENPB, CENPC, CENPT, CENPN, HJURP, SUPT16H, SSRP1 and RSF1. Interacts with MEIKIN.

Its subcellular location is the nucleus. The protein resides in the chromosome. It localises to the centromere. The protein localises to the kinetochore. In terms of biological role, component of the CENPA-NAC (nucleosome-associated) complex, a complex that plays a central role in assembly of kinetochore proteins, mitotic progression and chromosome segregation. The CENPA-NAC complex recruits the CENPA-CAD (nucleosome distal) complex and may be involved in incorporation of newly synthesized CENPA into centromeres. CENPC recruits DNA methylation and DNMT3B to both centromeric and pericentromeric satellite repeats and regulates the histone code in these regions. This chain is Centromere protein C (CENPC), found in Homo sapiens (Human).